The sequence spans 201 residues: FMN-dependent NADH:quinone oxidoreductase (201 aa).

FMN contacts are provided by residues serine 10, 16–18 (SQS), 96–99 (MYNF), and 140–143 (SRGG).

This sequence belongs to the azoreductase type 1 family. Homodimer. FMN is required as a cofactor.

It catalyses the reaction 2 a quinone + NADH + H(+) = 2 a 1,4-benzosemiquinone + NAD(+). It carries out the reaction N,N-dimethyl-1,4-phenylenediamine + anthranilate + 2 NAD(+) = 2-(4-dimethylaminophenyl)diazenylbenzoate + 2 NADH + 2 H(+). Its function is as follows. Quinone reductase that provides resistance to thiol-specific stress caused by electrophilic quinones. In terms of biological role, also exhibits azoreductase activity. Catalyzes the reductive cleavage of the azo bond in aromatic azo compounds to the corresponding amines. This Yersinia pseudotuberculosis serotype O:1b (strain IP 31758) protein is FMN-dependent NADH:quinone oxidoreductase.